A 91-amino-acid polypeptide reads, in one-letter code: Teretoxin Tan22.13 (91 aa).

Residues 1–21 (MKVQILFALMMVLVTLCLGQK) form the signal peptide. The propeptide occupies 22–24 (MQR).

The protein belongs to the teretoxin C (TC) superfamily. In terms of processing, contains 4 disulfide bonds. As to expression, expressed by the venom duct.

The protein resides in the secreted. The chain is Teretoxin Tan22.13 from Terebra anilis (Auger snail).